A 472-amino-acid chain; its full sequence is WASH complex subunit 1 (472 aa).

Residues 1-51 (MPQNRSMESQAYSLPLILPDLRREEAIHQITDTLQHLQTVSNDIFSRILQR) are required for WASH complex assembly. 3 disordered regions span residues 289-365 (ENSR…SDGR), 377-412 (GIGK…GDLM), and 426-472 (ISGK…DWES). 2 stretches are compositionally biased toward pro residues: residues 301 to 319 (LPPP…PPEP) and 327 to 336 (SLAPPLPIPA). The segment at 352–472 (QGAPKEVVNP…GDGDEEDWES (121 aa)) is VCA. The region spanning 364–386 (GRASLLESIRQAGGIGKAKLRNV) is the WH2 domain. The segment covering 385–401 (NVKEKKLEKKKMKEQEQ) has biased composition (basic and acidic residues).

It belongs to the WASH1 family. In terms of assembly, component of the WASH complex.

Its subcellular location is the early endosome membrane. The protein localises to the recycling endosome membrane. Acts as a nucleation-promoting factor at the surface of endosomes, where it recruits and activates the Arp2/3 complex to induce actin polymerization, playing a key role in the fission of tubules that serve as transport intermediates during endosome sorting. In Xenopus tropicalis (Western clawed frog), this protein is WASH complex subunit 1.